Here is a 198-residue protein sequence, read N- to C-terminus: Putative glutathione S-transferase alpha-2 (198 aa).

N-acetylserine is present on Ser-2. A GST N-terminal domain is found at 5-81; that stretch reads SVPSLTYFQG…YIAKKHNFMG (77 aa). Glutathione is bound by residues Tyr-11, Arg-45, 52–53, and 65–66; these read QL and QS. Positions 83-198 constitute a GST C-terminal domain; that stretch reads NLEEEFLVDQ…YIKERPETKF (116 aa).

This sequence belongs to the GST superfamily. Alpha family.

It carries out the reaction RX + glutathione = an S-substituted glutathione + a halide anion + H(+). Functionally, conjugation of reduced glutathione to a wide number of exogenous and endogenous hydrophobic electrophiles. The protein is Putative glutathione S-transferase alpha-2 (gsta2-1) of Dictyostelium discoideum (Social amoeba).